The chain runs to 100 residues: NADH-ubiquinone oxidoreductase chain 4L (100 aa).

Helical transmembrane passes span 3 to 23, 28 to 48, and 62 to 82; these read LVKY…GIFL, ILIM…NFLV, and ALFV…ILVI.

The protein belongs to the complex I subunit 4L family. In terms of assembly, complex I is composed of about 45 different subunits.

Its subcellular location is the mitochondrion membrane. It catalyses the reaction a ubiquinone + NADH + 5 H(+)(in) = a ubiquinol + NAD(+) + 4 H(+)(out). In terms of biological role, core subunit of the mitochondrial membrane respiratory chain NADH dehydrogenase (Complex I) that is believed to belong to the minimal assembly required for catalysis. Complex I functions in the transfer of electrons from NADH to the respiratory chain. The immediate electron acceptor for the enzyme is believed to be ubiquinone. This chain is NADH-ubiquinone oxidoreductase chain 4L (ND4L), found in Marchantia polymorpha (Common liverwort).